The sequence spans 533 residues: Multicopy suppressor of sporulation protein msa1 (533 aa).

The segment at 30–68 (DIPPGSLSENDNSTTFIKPPLETASSSTPIPSSSSSGVL) is disordered. Polar residues predominate over residues 36–45 (LSENDNSTTF). A compositionally biased stretch (low complexity) spans 54-68 (SSSTPIPSSSSSGVL). The RRM 1 domain maps to 79 to 158 (ACLFVASLNS…RHIRIERAKV (80 aa)). A disordered region spans residues 237–292 (YKKKGSSPFSPPNAHSRRRKSQGKDQSNTPVIKAPAPIPFSVSSDPPSTMGRSNSA). The segment covering 277–292 (SVSSDPPSTMGRSNSA) has biased composition (polar residues). One can recognise an RRM 2 domain in the interval 365–441 (YSIFVGQLDP…KPLRVEFRQL (77 aa)).

The protein localises to the cytoplasm. Its function is as follows. Negative regulator of sexual differentiation. Acts by repressing the transcription of meiosis-inducing, ste11-regulated genes. This chain is Multicopy suppressor of sporulation protein msa1 (msa1), found in Schizosaccharomyces pombe (strain 972 / ATCC 24843) (Fission yeast).